The sequence spans 229 residues: Cytochrome c oxidase subunit 2 (229 aa).

At 1-26 (MSTWANLGLQDSASPLMEQLIFFHDH) the chain is on the mitochondrial intermembrane side. Residues 27–48 (ALLILVMITVLVGYLMFMLFFN) traverse the membrane as a helical segment. Residues 49–62 (SYVNRFLLHGQLIE) are Mitochondrial matrix-facing. Residues 63-82 (MIWTILPAIILLFIAMPSLR) form a helical membrane-spanning segment. At 83-229 (LLYLLDEINE…IKWISNSVNS (147 aa)) the chain is on the mitochondrial intermembrane side. Cu cation contacts are provided by H161, C196, E198, C200, H204, and M207. Residue E198 coordinates Mg(2+).

The protein belongs to the cytochrome c oxidase subunit 2 family. In terms of assembly, component of the cytochrome c oxidase (complex IV, CIV), a multisubunit enzyme composed of a catalytic core of 3 subunits and several supernumerary subunits. The complex exists as a monomer or a dimer and forms supercomplexes (SCs) in the inner mitochondrial membrane with ubiquinol-cytochrome c oxidoreductase (cytochrome b-c1 complex, complex III, CIII). It depends on Cu cation as a cofactor.

It is found in the mitochondrion inner membrane. It catalyses the reaction 4 Fe(II)-[cytochrome c] + O2 + 8 H(+)(in) = 4 Fe(III)-[cytochrome c] + 2 H2O + 4 H(+)(out). Its function is as follows. Component of the cytochrome c oxidase, the last enzyme in the mitochondrial electron transport chain which drives oxidative phosphorylation. The respiratory chain contains 3 multisubunit complexes succinate dehydrogenase (complex II, CII), ubiquinol-cytochrome c oxidoreductase (cytochrome b-c1 complex, complex III, CIII) and cytochrome c oxidase (complex IV, CIV), that cooperate to transfer electrons derived from NADH and succinate to molecular oxygen, creating an electrochemical gradient over the inner membrane that drives transmembrane transport and the ATP synthase. Cytochrome c oxidase is the component of the respiratory chain that catalyzes the reduction of oxygen to water. Electrons originating from reduced cytochrome c in the intermembrane space (IMS) are transferred via the dinuclear copper A center (CU(A)) of subunit 2 and heme A of subunit 1 to the active site in subunit 1, a binuclear center (BNC) formed by heme A3 and copper B (CU(B)). The BNC reduces molecular oxygen to 2 water molecules using 4 electrons from cytochrome c in the IMS and 4 protons from the mitochondrial matrix. The protein is Cytochrome c oxidase subunit 2 (mt:CoII) of Drosophila narragansett (Fruit fly).